We begin with the raw amino-acid sequence, 389 residues long: Na(+)/H(+) antiporter NhaA 1 (389 aa).

Transmembrane regions (helical) follow at residues 12–32, 62–82, 97–117, 128–148, 157–177, 184–204, 220–240, 260–280, 282–302, 331–351, and 365–385; these read VLNE…ALLV, FLLW…GLEL, IVLP…LFAL, GWAI…MMCG, IFLL…IAIF, IVAF…NLLG, ISVL…AFFI, FWIA…VNLS, IDIG…LFVG, LYGV…IDGL, and LAIL…LKFF.

It belongs to the NhaA Na(+)/H(+) (TC 2.A.33) antiporter family.

Its subcellular location is the cell inner membrane. The enzyme catalyses Na(+)(in) + 2 H(+)(out) = Na(+)(out) + 2 H(+)(in). Functionally, na(+)/H(+) antiporter that extrudes sodium in exchange for external protons. This Campylobacter jejuni (strain RM1221) protein is Na(+)/H(+) antiporter NhaA 1.